We begin with the raw amino-acid sequence, 148 residues long: Large ribosomal subunit protein uL15 (148 aa).

The disordered stretch occupies residues 1–51 (MNLSSLKPAEGAVKSRKRIGRGPGSGLGGTSTRGHKGAKSRSGYSKKIGFE). A compositionally biased stretch (gly residues) spans 21–31 (RGPGSGLGGTS).

Belongs to the universal ribosomal protein uL15 family. As to quaternary structure, part of the 50S ribosomal subunit.

Functionally, binds to the 23S rRNA. The protein is Large ribosomal subunit protein uL15 of Porphyromonas gingivalis (strain ATCC BAA-308 / W83).